A 329-amino-acid chain; its full sequence is Putative glycosyltransferase CsbB (329 aa).

A run of 2 helical transmembrane segments spans residues 231–251 and 264–284; these read CFYT…ATFV and FTII…LGII.

It belongs to the glycosyltransferase 2 family. GtrB subfamily.

The protein resides in the cell membrane. This is Putative glycosyltransferase CsbB (csbB) from Bacillus subtilis (strain 168).